The primary structure comprises 470 residues: L-seryl-tRNA(Sec) selenium transferase (470 aa).

Lysine 294 carries the post-translational modification N6-(pyridoxal phosphate)lysine.

This sequence belongs to the SelA family. It depends on pyridoxal 5'-phosphate as a cofactor.

It is found in the cytoplasm. It carries out the reaction L-seryl-tRNA(Sec) + selenophosphate + H(+) = L-selenocysteinyl-tRNA(Sec) + phosphate. It participates in aminoacyl-tRNA biosynthesis; selenocysteinyl-tRNA(Sec) biosynthesis; selenocysteinyl-tRNA(Sec) from L-seryl-tRNA(Sec) (bacterial route): step 1/1. In terms of biological role, converts seryl-tRNA(Sec) to selenocysteinyl-tRNA(Sec) required for selenoprotein biosynthesis. In Solidesulfovibrio magneticus (strain ATCC 700980 / DSM 13731 / RS-1) (Desulfovibrio magneticus), this protein is L-seryl-tRNA(Sec) selenium transferase.